We begin with the raw amino-acid sequence, 512 residues long: mRNA export factor (512 aa).

A compositionally biased stretch (low complexity) spans 1–15 (MATDIDMLIDLGLDL). Positions 1–243 (MATDIDMLID…APERKAPAAD (243 aa)) are disordered. The Nuclear export signal signature appears at 5–17 (IDMLIDLGLDLSD). 2 positions are modified to phosphoserine; by host: Ser-16 and Ser-18. Acidic residues-rich tracts occupy residues 16–26 (SDSDLDEDPPE) and 35–51 (LESDSSGECSSSDEDME). The tract at residues 104-112 (VWSRLGARR) is interaction with host ALYREF. The Nuclear localization signal motif lies at 110–138 (ARRPSCSPEQHGGKVARLQPPPTKAQPAR). A Phosphoserine; by host modification is found at Ser-114. Residue Arg-138 is modified to Dimethylated arginine; by host. Positions 138-152 (RGGRRGRRRGRGRGG) are RGG-box. The segment covering 139–149 (GGRRGRRRGRG) has biased composition (basic residues). At Arg-148 the chain carries Omega-N-methylarginine; by host. Position 150 is a dimethylated arginine; by host (Arg-150). A compositionally biased stretch (pro residues) spans 214-233 (APPPLMTLAIAPPPADPRAP). Positions 400, 479, 483, and 488 each coordinate Zn(2+). The CHC2-type zinc finger occupies 400–488 (CYLKARGLCG…HRQECSSRVC (89 aa)). The important for homodimerization stretch occupies residues 500 to 512 (YVHGKYFYCNSLF).

The protein belongs to the HHV-1 ICP27 protein family. Homodimer. Interacts with host RBP1; this interaction facilitates the RNA polymerase recruitment to viral transcription sites. Interacts (via the RGG box) with host ALYREF/THOC4; this interaction recruits ALYREF to viral replication compartments and probably directs viral mRNA to the TAP/NFX1 pathway. Interacts with host ALYREF2. Interacts (via the RGG box) with host SRPK1; this interaction relocalizes SRPK1 to the nucleus and seems to alter its activity. Interacts with ICP4; this interaction modulates ICP4 DNA-binding activity. Interacts with host NXF1; this interaction allows efficient export of HHV-1 early and late transcripts. Post-translationally, methylated within the RGG box possibly by host PRMT1. When hypomethylated, ICP27 is exported to the cytoplasm earlier and more rapidly. Phosphorylated.

The protein localises to the host cytoplasm. Its subcellular location is the host nucleus. Functionally, multifunctional regulator of the expression of viral genes that contributes to the shutoff of host protein synthesis and mediates nuclear export of viral intronless mRNAs. Early in infection, this immediate early (EI) protein mediates the inhibition of cellular splicing. This results in the accumulation of unprocessed 3'end pre-mRNAs which can't be exported from the nucleus. Cellular protein synthesis is thereby shut off early after virus infection. Later in the infection, it helps recruit cellular RNA polymerase II to viral replication sites and promotes the nuclear export of viral intronless mRNAs by interacting with mRNAs and host NXF1/TAP. ICP27 binds to NUP62 which may provide facilitated viral mRNA export and may indirectly compete with some host cell transport receptors for binding and inhibit cellular nucleocytoplasmic transport pathways. Also stimulates translation of viral transcripts. Repression of host gene expression blocks the cell cycle at the G1 phase and prevents apoptosis. Seems to silence the 3' splice site of the promyelocytic leukemia (PML) intron 7a, thereby switching PML isoforms from PML-II to PML-V. This could be linked to the accelerated mRNA export induced by ICP27 which might not provide sufficient time for PML pre-mRNA to be spliced in the nucleus. This Homo sapiens (Human) protein is mRNA export factor.